The sequence spans 245 residues: CMRF35-like molecule 3 (245 aa).

Positions 1-18 (MWQFPALLFLFLPGCCTA) are cleaved as a signal peptide. Residues 19 to 124 (QDPVTGPEEV…TDPMFKVNVN (106 aa)) form the Ig-like V-type domain. At 19–189 (QDPVTGPEEV…FIWSLLSSIS (171 aa)) the chain is on the extracellular side. Cys40 and Cys108 are disulfide-bonded. Important for maintaining surface expression and for interaction with FCER1G stretches follow at residues 177-182 (NSLFIW) and 189-198 (SFLLMVFVVV). A helical membrane pass occupies residues 190 to 210 (FLLMVFVVVPLLLSMLSAVLW). Residues 211–245 (VNRPQRHYGGGEIGLVETHRSDALDGEKHFPGDEK) are Cytoplasmic-facing.

Belongs to the CD300 family. As to quaternary structure, interacts with FCER1G; the interaction may be indirect. Interacts with TLR9. As to expression, highly expressed in bone marrow-derived mast cells and macrophages, peripheral blood monocytes and CD11c+ cells, with weaker expression detected in CD11b cells in bone marrow and peripheral blood. Not detected in B220+ cells in bone marrow or spleen, in Thy-1.2+ or CD3+ cells in peripheral blood, spleen or thymus, or in NK1.1+ cells in spleen (at protein level). Widely expressed in various tissues including heart, liver, spleen, lung, kidney, brain, bone marrow, thymus, axillary lymph node and mesenteric lymph node. Highly expressed in macrophage cell lines J774.1 and RAW 264.7 and in mast cell line MC/9. Weak expression detected in B-lineage cell lines WEHI-231 and A20 and in dendritic cell line DC2.4. Not detected in other myeloid cell lines or T-lineage cell lines.

It is found in the cell membrane. It localises to the early endosome. Its subcellular location is the lysosome. Acts as an activating receptor inducing cytokine production in mast cells. Can act as a positive regulator of TLR9 signaling in macrophages, leading to enhanced production of pro-inflammatory cytokines. In Mus musculus (Mouse), this protein is CMRF35-like molecule 3.